Reading from the N-terminus, the 430-residue chain is Asparagine--tRNA ligase (430 aa).

Belongs to the class-II aminoacyl-tRNA synthetase family. As to quaternary structure, homodimer.

Its subcellular location is the cytoplasm. It catalyses the reaction tRNA(Asn) + L-asparagine + ATP = L-asparaginyl-tRNA(Asn) + AMP + diphosphate + H(+). This Listeria innocua serovar 6a (strain ATCC BAA-680 / CLIP 11262) protein is Asparagine--tRNA ligase.